We begin with the raw amino-acid sequence, 134 residues long: MAKKWLNKVKWDDNGLVPVIVQEVGSNDVLMFAFMNRDALQRTVELGEAVFWSRSRKRLWHKGEESGHVQKVHEIRLDCDEDVVLLKVTQIDNIACHTGRHSCFFQKFEGDVEVGDWQTVEPVLKDPAQIYTKP.

D78 is a binding site for Mg(2+). C79 serves as a coordination point for Zn(2+). 2 residues coordinate Mg(2+): D80 and D82. Residues C96 and C103 each contribute to the Zn(2+) site.

This sequence belongs to the PRA-CH family. In terms of assembly, homodimer. Mg(2+) serves as cofactor. Requires Zn(2+) as cofactor.

It localises to the cytoplasm. It carries out the reaction 1-(5-phospho-beta-D-ribosyl)-5'-AMP + H2O = 1-(5-phospho-beta-D-ribosyl)-5-[(5-phospho-beta-D-ribosylamino)methylideneamino]imidazole-4-carboxamide. It functions in the pathway amino-acid biosynthesis; L-histidine biosynthesis; L-histidine from 5-phospho-alpha-D-ribose 1-diphosphate: step 3/9. Its function is as follows. Catalyzes the hydrolysis of the adenine ring of phosphoribosyl-AMP. This Cupriavidus necator (strain ATCC 17699 / DSM 428 / KCTC 22496 / NCIMB 10442 / H16 / Stanier 337) (Ralstonia eutropha) protein is Phosphoribosyl-AMP cyclohydrolase.